A 219-amino-acid chain; its full sequence is PKHD-type hydroxylase Plav_0037 (219 aa).

A Fe2OG dioxygenase domain is found at 78-172; that stretch reads NFIRILLSRY…RRAAVGWIRS (95 aa). Positions 96, 98, and 153 each coordinate Fe cation. Arginine 163 contributes to the 2-oxoglutarate binding site.

Requires Fe(2+) as cofactor. L-ascorbate is required as a cofactor.

This chain is PKHD-type hydroxylase Plav_0037, found in Parvibaculum lavamentivorans (strain DS-1 / DSM 13023 / NCIMB 13966).